A 241-amino-acid chain; its full sequence is Ribonuclease PH (241 aa).

Residues Arg87 and 125-127 (GTR) each bind phosphate.

It belongs to the RNase PH family. Homohexameric ring arranged as a trimer of dimers.

The enzyme catalyses tRNA(n+1) + phosphate = tRNA(n) + a ribonucleoside 5'-diphosphate. In terms of biological role, phosphorolytic 3'-5' exoribonuclease that plays an important role in tRNA 3'-end maturation. Removes nucleotide residues following the 3'-CCA terminus of tRNAs; can also add nucleotides to the ends of RNA molecules by using nucleoside diphosphates as substrates, but this may not be physiologically important. Probably plays a role in initiation of 16S rRNA degradation (leading to ribosome degradation) during starvation. The protein is Ribonuclease PH of Dehalococcoides mccartyi (strain ATCC BAA-2100 / JCM 16839 / KCTC 5957 / BAV1).